The primary structure comprises 1382 residues: Hepatocyte growth factor receptor (1382 aa).

The first 24 residues, 1 to 24 (MKASAVLAPGILALLFTLVQGSDG), serve as a signal peptide directing secretion. At 25 to 935 (ECHEALAKSE…VQPDQNFTGL (911 aa)) the chain is on the extracellular side. The Sema domain occupies 27–516 (HEALAKSEMN…TGKRITKIPL (490 aa)). Residues asparagine 45, asparagine 100, and asparagine 106 are each glycosylated (N-linked (GlcNAc...) asparagine). Cystine bridges form between cysteine 95/cysteine 101, cysteine 98/cysteine 160, cysteine 133/cysteine 141, and cysteine 173/cysteine 176. Residues asparagine 203 and asparagine 359 are each glycosylated (N-linked (GlcNAc...) asparagine). Disulfide bonds link cysteine 299–cysteine 364 and cysteine 386–cysteine 398. Residues asparagine 400 and asparagine 406 are each glycosylated (N-linked (GlcNAc...) asparagine). Intrachain disulfides connect cysteine 521–cysteine 539, cysteine 527–cysteine 562, cysteine 530–cysteine 546, and cysteine 542–cysteine 552. 3 consecutive IPT/TIG domains span residues 564 to 656 (PAIH…FSYV), 658 to 740 (PVIT…FSYQ), and 743 to 837 (PVVY…LIYV). O-linked (Man) threonine glycosylation is present at threonine 583. Residues asparagine 608 and asparagine 636 are each glycosylated (N-linked (GlcNAc...) asparagine). Threonine 677 and threonine 762 each carry an O-linked (Man) threonine glycan. Asparagine 786, asparagine 880, and asparagine 931 each carry an N-linked (GlcNAc...) asparagine glycan. The chain crosses the membrane as a helical span at residues 936 to 956 (IVGVVSISIILLLLLGLFLWM). At 957–1382 (KKRKQIKDLG…QDNINGEVDT (426 aa)) the chain is on the cytoplasmic side. Serine 967 carries the phosphoserine modification. The residue at position 978 (threonine 978) is a Phosphothreonine. 3 positions are modified to phosphoserine: serine 991, serine 998, and serine 1001. A Phosphotyrosine modification is found at tyrosine 1004. A Protein kinase domain is found at 1079–1346 (VHFNEVIGRG…RISAIFSTFI (268 aa)). ATP-binding positions include 1085 to 1093 (IGRGHFGCV) and lysine 1111. Catalysis depends on aspartate 1205, which acts as the Proton acceptor. The interval 1213-1382 (LDEKFTVKVA…QDNINGEVDT (170 aa)) is interaction with RANBP9. The residue at position 1231 (tyrosine 1231) is a Phosphotyrosine. Residues tyrosine 1235 and tyrosine 1236 each carry the phosphotyrosine; by autocatalysis modification. Threonine 1290 carries the post-translational modification Phosphothreonine. The interval 1321–1360 (WHPKAEMRPSFSELVSRISAIFSTFIGEHYVHVNATYVNV) is interaction with MUC20. Tyrosine 1350 and tyrosine 1357 each carry phosphotyrosine; by autocatalysis. The residue at position 1366 (tyrosine 1366) is a Phosphotyrosine.

Belongs to the protein kinase superfamily. Tyr protein kinase family. As to quaternary structure, heterodimer made of an alpha chain (50 kDa) and a beta chain (145 kDa) which are disulfide linked. Binds PLXNB1. Interacts when phosphorylated with downstream effectors including STAT3, PIK3R1, SRC, PCLG1, GRB2 and GAB1. Interacts with SPSB1, SPSB2 and SPSB4. Interacts with INPP5D/SHIP1. When phosphorylated at Tyr-1357, interacts with INPPL1/SHIP2. Interacts with RANBP9 and RANBP10, as well as SPSB1, SPSB2, SPSB3 and SPSB4. SPSB1 binding occurs in the presence and in the absence of HGF, however HGF treatment has a positive effect on this interaction. Interacts with MUC20; prevents interaction with GRB2 and suppresses hepatocyte growth factor-induced cell proliferation. Interacts with GRB10. Interacts with PTPN1 and PTPN2. Interacts with HSP90AA1 and HSP90AB1; the interaction suppresses MET kinase activity. Interacts with tensin TNS3. Interacts (when phosphorylated) with tensin TNS4 (via SH2 domain); the interaction increases MET protein stability by inhibiting MET endocytosis and subsequent lysosomal degradation. Post-translationally, autophosphorylated in response to ligand binding on Tyr-1235 and Tyr-1236 in the kinase domain leading to further phosphorylation of Tyr-1350 and Tyr-1357 in the C-terminal multifunctional docking site. Dephosphorylated by PTPRJ at Tyr-1350 and Tyr-1366. Dephosphorylated by PTPN1 and PTPN2. In terms of processing, ubiquitinated. Ubiquitination by CBL regulates the receptor stability and activity through proteasomal degradation. O-mannosylation of IPT/TIG domains by TMEM260 is required for protein maturation. O-mannosylated residues are composed of single mannose glycans that are not elongated or modified.

The protein localises to the membrane. The catalysed reaction is L-tyrosyl-[protein] + ATP = O-phospho-L-tyrosyl-[protein] + ADP + H(+). In its inactive state, the C-terminal tail interacts with the catalytic domain and inhibits the kinase activity. Upon ligand binding, the C-terminal tail is displaced and becomes phosphorylated, thus increasing the kinase activity. Its function is as follows. Receptor tyrosine kinase that transduces signals from the extracellular matrix into the cytoplasm by binding to hepatocyte growth factor/HGF ligand. Regulates many physiological processes including proliferation, scattering, morphogenesis and survival. Ligand binding at the cell surface induces autophosphorylation of MET on its intracellular domain that provides docking sites for downstream signaling molecules. Following activation by ligand, interacts with the PI3-kinase subunit PIK3R1, PLCG1, SRC, GRB2, STAT3 or the adapter GAB1. Recruitment of these downstream effectors by MET leads to the activation of several signaling cascades including the RAS-ERK, PI3 kinase-AKT, or PLCgamma-PKC. The RAS-ERK activation is associated with the morphogenetic effects while PI3K/AKT coordinates prosurvival effects. During embryonic development, MET signaling plays a role in gastrulation, development and migration of muscles and neuronal precursors, angiogenesis and kidney formation. In adults, participates in wound healing as well as organ regeneration and tissue remodeling. Also promotes differentiation and proliferation of hematopoietic cells. The protein is Hepatocyte growth factor receptor (MET) of Microcebus murinus (Gray mouse lemur).